A 328-amino-acid polypeptide reads, in one-letter code: Bidirectional sugar transporter SWEET16 (328 aa).

Residues 1 to 5 are Extracellular-facing; it reads MADPS. The helical transmembrane segment at 6-26 threads the bilayer; sequence FFVGIVGNVISILVFASPIAT. Positions 6–92 constitute a MtN3/slv 1 domain; sequence FFVGIVGNVI…TLYLAYAPRE (87 aa). Over 27–38 the chain is Cytoplasmic; that stretch reads FRRIVRSKSTEE. A helical membrane pass occupies residues 39 to 56; it reads FRWLPYVTTLLSTSLWTF. The Extracellular portion of the chain corresponds to 57-63; the sequence is YGLHKPG. The chain crosses the membrane as a helical span at residues 64 to 84; sequence GLLIVTVNGSGAALEAIYVTL. The Cytoplasmic segment spans residues 85 to 99; the sequence is YLAYAPRETKAKMVK. A helical membrane pass occupies residues 100-120; the sequence is VVLAVNVGALAAVVAVALVAL. The Extracellular portion of the chain corresponds to 121 to 125; the sequence is HGGVR. The chain crosses the membrane as a helical span at residues 126 to 146; sequence LFVVGVLCAALTIGMYAAPMA. The MtN3/slv 2 domain occupies 127–213; sequence FVVGVLCAAL…LYMAYRRTKK (87 aa). At 147–161 the chain is on the cytoplasmic side; that stretch reads AMRTVVKTRSVEYMP. The chain crosses the membrane as a helical span at residues 162 to 182; the sequence is FSLSFFLFLNGGVWSVYSLLV. Residues 183 to 185 are Extracellular-facing; that stretch reads KDY. A helical membrane pass occupies residues 186–206; sequence FIGIPNAIGFALGTAQLALYM. The Cytoplasmic portion of the chain corresponds to 207-328; that stretch reads AYRRTKKPAG…ATTAGPGDRH (122 aa). Positions 288-299 are enriched in basic residues; sequence HQHHGGHHHHHR. The disordered stretch occupies residues 288-328; that stretch reads HQHHGGHHHHHRFDTVPDDDDEAVAAGGTTPATTAGPGDRH. The span at 312–328 shows a compositional bias: low complexity; the sequence is AAGGTTPATTAGPGDRH.

This sequence belongs to the SWEET sugar transporter family. As to quaternary structure, forms homooligomers and/or heterooligomers.

It is found in the cell membrane. Functionally, mediates both low-affinity uptake and efflux of sugar across the plasma membrane. The sequence is that of Bidirectional sugar transporter SWEET16 (SWEET16) from Oryza sativa subsp. japonica (Rice).